We begin with the raw amino-acid sequence, 91 residues long: uncharacterized protein (91 aa).

It belongs to the UPF0440 family.

This is an uncharacterized protein from Methanothermobacter thermautotrophicus (strain ATCC 29096 / DSM 1053 / JCM 10044 / NBRC 100330 / Delta H) (Methanobacterium thermoautotrophicum).